Consider the following 286-residue polypeptide: Pantothenate synthetase (286 aa).

30 to 37 (MGNLHEGH) is an ATP binding site. His37 acts as the Proton donor in catalysis. Position 64 (Gln64) interacts with (R)-pantoate. Residue Gln64 participates in beta-alanine binding. 151 to 154 (GKKD) lines the ATP pocket. Gln157 provides a ligand contact to (R)-pantoate. Residues Leu180 and 188–191 (LSSR) contribute to the ATP site.

This sequence belongs to the pantothenate synthetase family. As to quaternary structure, homodimer.

The protein resides in the cytoplasm. It catalyses the reaction (R)-pantoate + beta-alanine + ATP = (R)-pantothenate + AMP + diphosphate + H(+). The protein operates within cofactor biosynthesis; (R)-pantothenate biosynthesis; (R)-pantothenate from (R)-pantoate and beta-alanine: step 1/1. Its function is as follows. Catalyzes the condensation of pantoate with beta-alanine in an ATP-dependent reaction via a pantoyl-adenylate intermediate. This is Pantothenate synthetase from Leptothrix cholodnii (strain ATCC 51168 / LMG 8142 / SP-6) (Leptothrix discophora (strain SP-6)).